The chain runs to 351 residues: Modulator of apoptosis 1 (351 aa).

The LIR signature appears at 49-52; that stretch reads YRLL. A BH3-like region spans residues 120–127; the sequence is LSRALGHE. An RASSF1-binding region spans residues 202–205; sequence KRRR.

The protein belongs to the PNMA family. As to quaternary structure, homodimer. Under normal circumstances, held in an inactive conformation by an intramolecular interaction. Interacts with BAX. Binding to RASSF1 isoform A (RASSF1A) relieves this inhibitory interaction and allows further binding to BAX. Also binds to BCL2 and BCLX. Recruited to the TNFRSF1A and TNFRSF10A complexes in response to their respective cognate ligand, after internalization. Interacts with TRIM39. Interacts with RASSF6. Interacts with ATG8 proteins MAP1LC3A, MAP1LC3B and MAP1LC3C. Does not interact with ATG8 proteins GABARAPL1, GABARAPL2 and GABARAP. Interacts with SQSTM1; promoting dissociation of SQSTM1 inclusion bodies that sequester KEAP1. Ubiquitinated and degraded during mitotic exit by APC/C-Cdh1, this modification is inhibited by TRIM39. Widely expressed, with high levels in heart and brain.

It localises to the cytoplasm. The protein localises to the cytosol. The protein resides in the mitochondrion outer membrane. It is found in the extracellular vesicle membrane. Its function is as follows. Retrotransposon-derived protein that forms virion-like capsids. Acts as an effector of BAX during apoptosis: enriched at outer mitochondria membrane and associates with BAX upon induction of apoptosis, facilitating BAX-dependent mitochondrial outer membrane permeabilization and apoptosis. Required for death receptor-dependent apoptosis. When associated with RASSF1, promotes BAX conformational change and translocation to mitochondrial membranes in response to TNF and TNFSF10 stimulation. Also promotes autophagy: promotes phagophore closure via association with ATG8 proteins. Acts as an inhibitor of the NFE2L2/NRF2 pathway via interaction with SQSTM1: interaction promotes dissociation of SQSTM1 inclusion bodies that sequester KEAP1, relieving inactivation of the BCR(KEAP1) complex. This is Modulator of apoptosis 1 from Homo sapiens (Human).